The following is a 148-amino-acid chain: Large ribosomal subunit protein bL9 (148 aa).

Belongs to the bacterial ribosomal protein bL9 family.

Functionally, binds to the 23S rRNA. This is Large ribosomal subunit protein bL9 from Frankia alni (strain DSM 45986 / CECT 9034 / ACN14a).